Reading from the N-terminus, the 428-residue chain is 3-phosphoshikimate 1-carboxyvinyltransferase (428 aa).

Positions 21, 22, and 26 each coordinate 3-phosphoshikimate. Residue Lys21 participates in phosphoenolpyruvate binding. Phosphoenolpyruvate is bound by residues Gly94 and Arg122. Residues Ser166, Ser167, Gln168, Ser194, Asp306, and Lys333 each coordinate 3-phosphoshikimate. Gln168 contributes to the phosphoenolpyruvate binding site. Asp306 functions as the Proton acceptor in the catalytic mechanism. Residues Arg337, Arg379, and Lys405 each contribute to the phosphoenolpyruvate site.

Belongs to the EPSP synthase family. In terms of assembly, monomer.

It localises to the cytoplasm. It carries out the reaction 3-phosphoshikimate + phosphoenolpyruvate = 5-O-(1-carboxyvinyl)-3-phosphoshikimate + phosphate. It participates in metabolic intermediate biosynthesis; chorismate biosynthesis; chorismate from D-erythrose 4-phosphate and phosphoenolpyruvate: step 6/7. Functionally, catalyzes the transfer of the enolpyruvyl moiety of phosphoenolpyruvate (PEP) to the 5-hydroxyl of shikimate-3-phosphate (S3P) to produce enolpyruvyl shikimate-3-phosphate and inorganic phosphate. In Clostridium acetobutylicum (strain ATCC 824 / DSM 792 / JCM 1419 / IAM 19013 / LMG 5710 / NBRC 13948 / NRRL B-527 / VKM B-1787 / 2291 / W), this protein is 3-phosphoshikimate 1-carboxyvinyltransferase.